We begin with the raw amino-acid sequence, 233 residues long: Large ribosomal subunit protein uL1 (233 aa).

This sequence belongs to the universal ribosomal protein uL1 family. In terms of assembly, part of the 50S ribosomal subunit.

Functionally, binds directly to 23S rRNA. The L1 stalk is quite mobile in the ribosome, and is involved in E site tRNA release. Protein L1 is also a translational repressor protein, it controls the translation of the L11 operon by binding to its mRNA. The chain is Large ribosomal subunit protein uL1 from Aeromonas salmonicida (strain A449).